The chain runs to 166 residues: Myosin regulatory light chain 2, ventricular/cardiac muscle isoform (166 aa).

The residue at position 2 (Ala2) is a N,N,N-trimethylalanine. Asn14 carries the deamidated asparagine modification. Ser15 is subject to Phosphoserine; by ZIPK/DAPK3. Ser19 bears the Phosphoserine mark. 3 consecutive EF-hand domains span residues 24–59 (TQIQ…LGRV), 94–129 (DPEE…QAER), and 130–165 (FSKE…GEEK). Ca(2+) contacts are provided by Asp37, Asn39, Asp41, and Asp48. Position 52 is a phosphothreonine (Thr52).

In terms of assembly, myosin is a hexamer of 2 heavy chains and 4 light chains. Interacts with MYOC. N-terminus is methylated by METTL11A/NTM1. In terms of processing, phosphorylated by MYLK3 and MYLK2; promotes cardiac muscle contraction and function. Dephosphorylated by PPP1CB complexed to PPP1R12B. The phosphorylated form in adult is expressed as gradients across the heart from endocardium (low phosphorylation) to epicardium (high phosphorylation); regulates cardiac torsion and workload distribution. In terms of tissue distribution, highly expressed in type I muscle fibers.

The protein resides in the cytoplasm. It is found in the myofibril. The protein localises to the sarcomere. Its subcellular location is the a band. Functionally, contractile protein that plays a role in heart development and function. Following phosphorylation, plays a role in cross-bridge cycling kinetics and cardiac muscle contraction by increasing myosin lever arm stiffness and promoting myosin head diffusion; as a consequence of the increase in maximum contraction force and calcium sensitivity of contraction force. These events altogether slow down myosin kinetics and prolong duty cycle resulting in accumulated myosins being cooperatively recruited to actin binding sites to sustain thin filament activation as a means to fine-tune myofilament calcium sensitivity to force. During cardiogenesis plays an early role in cardiac contractility by promoting cardiac myofibril assembly. This Homo sapiens (Human) protein is Myosin regulatory light chain 2, ventricular/cardiac muscle isoform.